The following is a 144-amino-acid chain: 3-hydroxyacyl-[acyl-carrier-protein] dehydratase FabZ (144 aa).

Histidine 47 is a catalytic residue.

It belongs to the thioester dehydratase family. FabZ subfamily.

The protein localises to the cytoplasm. The catalysed reaction is a (3R)-hydroxyacyl-[ACP] = a (2E)-enoyl-[ACP] + H2O. Its function is as follows. Involved in unsaturated fatty acids biosynthesis. Catalyzes the dehydration of short chain beta-hydroxyacyl-ACPs and long chain saturated and unsaturated beta-hydroxyacyl-ACPs. The chain is 3-hydroxyacyl-[acyl-carrier-protein] dehydratase FabZ from Dechloromonas aromatica (strain RCB).